The sequence spans 480 residues: Endothelial transcription factor GATA-2 (480 aa).

Ser73 carries the post-translational modification Phosphoserine. At Arg86 the chain carries Asymmetric dimethylarginine. Residues 166-208 (SGSHLFGFPPTPPKEVSPDPSTTGAASPASPSAGGSVARGEDK) form a disordered region. Over residues 183–201 (PDPSTTGAASPASPSAGGS) the composition is skewed to low complexity. Ser192 carries the phosphoserine modification. GATA-type zinc fingers lie at residues 295–319 (CVNC…CNAC) and 349–373 (CANC…CNAC). Residue Lys389 forms a Glycyl lysine isopeptide (Lys-Gly) (interchain with G-Cter in SUMO2) linkage. A disordered region spans residues 457–480 (TPIHPSSSLSFGHPHPSSMVTAMG).

As to quaternary structure, interacts with BRD3. Interacts with AR and CCAR1. Interacts with MDFIC.

Its subcellular location is the nucleus. Transcriptional activator which regulates endothelin-1 gene expression in endothelial cells. Binds to the consensus sequence 5'-AGATAG-3'. Plays an important role in the regulation of phagocytosis in alveolar macrophages, particularly during P.carinii infection. This Rattus norvegicus (Rat) protein is Endothelial transcription factor GATA-2.